A 491-amino-acid polypeptide reads, in one-letter code: N-succinylglutamate 5-semialdehyde dehydrogenase (491 aa).

NAD(+) is bound at residue 225–230; sequence GSSTVG. Residues E248 and C282 contribute to the active site.

Belongs to the aldehyde dehydrogenase family. AstD subfamily.

The catalysed reaction is N-succinyl-L-glutamate 5-semialdehyde + NAD(+) + H2O = N-succinyl-L-glutamate + NADH + 2 H(+). Its pathway is amino-acid degradation; L-arginine degradation via AST pathway; L-glutamate and succinate from L-arginine: step 4/5. In terms of biological role, catalyzes the NAD-dependent reduction of succinylglutamate semialdehyde into succinylglutamate. The polypeptide is N-succinylglutamate 5-semialdehyde dehydrogenase (Marinobacter nauticus (strain ATCC 700491 / DSM 11845 / VT8) (Marinobacter aquaeolei)).